Here is a 2097-residue protein sequence, read N- to C-terminus: SCAR-like protein 1 (2097 aa).

Disordered stretches follow at residues 205–227, 544–565, 1443–1467, 1588–1616, 1730–1802, 1820–1842, and 1893–1944; these read IANS…PRTT, AHSS…SIES, SQIA…PLSS, STEE…DPQK, QERV…EKTV, ASSH…PVTS, and YEGP…EGGY. A compositionally biased stretch (low complexity) spans 549–562; sequence KQSSQKSSGLDGSS. Polar residues predominate over residues 1443-1454; the sequence is SQIASCSPTPSN. The segment covering 1766–1794 has biased composition (polar residues); that stretch reads SISQQGLQGSVFPSDTSDNGEHSSYTSRA. Positions 1908-1922 are enriched in basic and acidic residues; sequence YPHDDHNSEKEDIHQ. The WH2 domain maps to 2028–2046; sequence ERNLLLEQIRNKTFNLKPV.

Belongs to the SCAR/WAVE family.

It localises to the cytoplasm. The protein resides in the cytoskeleton. Involved in regulation of actin and microtubule organization. Part of a WAVE complex that activates the Arp2/3 complex. In Oryza sativa subsp. japonica (Rice), this protein is SCAR-like protein 1.